Consider the following 199-residue polypeptide: MITYTKPLSKLIGHFEKFPGIGPRTAQRLALFILKQPESTIREFSKALLEAHSNVGRCKKCFNLTSEDECEICRNTERNQKLICVVAETKDLLALERAREFKGVYHVIGGLISPMDSVGPELLEIRSLVERVSKSEIDEIILALTPSVEGDTTSLYIGKLLAPFTKVTRIAYGLPMGSELEYVDEVTLARALEGRTKLN.

The segment at 58 to 73 (CKKCFNLTSEDECEIC) adopts a C4-type zinc-finger fold. One can recognise a Toprim domain in the interval 81–175 (KLICVVAETK…KVTRIAYGLP (95 aa)).

Belongs to the RecR family.

In terms of biological role, may play a role in DNA repair. It seems to be involved in an RecBC-independent recombinational process of DNA repair. It may act with RecF and RecO. The sequence is that of Recombination protein RecR from Prochlorococcus marinus (strain MIT 9301).